Here is a 229-residue protein sequence, read N- to C-terminus: C-&gt;U-editing enzyme APOBEC-1 (229 aa).

The CMP/dCMP-type deaminase domain maps to 10–134; sequence VDPTLRRRIE…PRNRQGLRDL (125 aa). Position 61 (His61) interacts with Zn(2+). Catalysis depends on Glu63, which acts as the Proton donor. Residues Cys93 and Cys96 each contribute to the Zn(2+) site.

This sequence belongs to the cytidine and deoxycytidylate deaminase family. In terms of assembly, homodimer. Interacts with A1CF; form an mRNA editing complex. Interacts with RBM47; form an mRNA editing complex. Found in a complex with CELF2/CUGBP2 and A1CF. Interacts with HNRPAB. Interacts with SYNCRIP. Requires Zn(2+) as cofactor. Expressed in the liver as well as small intestine.

Its subcellular location is the cytoplasm. It localises to the nucleus. The catalysed reaction is a cytidine in mRNA + H2O + H(+) = a uridine in mRNA + NH4(+). It carries out the reaction cytidine(6666) in apoB mRNA + H2O + H(+) = uridine(6666) in apoB mRNA + NH4(+). Functionally, cytidine deaminase catalyzing the cytidine to uridine postranscriptional editing of a variety of mRNAs. Form complexes with cofactors that confer differential editing activity and selectivity. Responsible for the postranscriptional editing of a CAA codon for Gln to a UAA codon for stop in the apolipoprotein B mRNA. Also involved in CGA (Arg) to UGA (Stop) editing in the NF1 mRNA. May also play a role in the epigenetic regulation of gene expression by participating in DNA demethylation. The chain is C-&gt;U-editing enzyme APOBEC-1 from Rattus norvegicus (Rat).